The chain runs to 1097 residues: DNA-directed RNA polymerase subunit beta (1097 aa).

A disordered region spans residues 1072–1097 (QDVNPRRSTPSRPTYESLGVADYDED).

This sequence belongs to the RNA polymerase beta chain family. In terms of assembly, in cyanobacteria the RNAP catalytic core is composed of 2 alpha, 1 beta, 1 beta', 1 gamma and 1 omega subunit. When a sigma factor is associated with the core the holoenzyme is formed, which can initiate transcription.

It catalyses the reaction RNA(n) + a ribonucleoside 5'-triphosphate = RNA(n+1) + diphosphate. DNA-dependent RNA polymerase catalyzes the transcription of DNA into RNA using the four ribonucleoside triphosphates as substrates. This chain is DNA-directed RNA polymerase subunit beta, found in Parasynechococcus marenigrum (strain WH8102).